Reading from the N-terminus, the 1184-residue chain is Nucleolar protein 6 (1184 aa).

The segment covering 1–10 (MGRIKEKESK) has biased composition (basic and acidic residues). 2 disordered regions span residues 1 to 42 (MGRI…NRVP) and 1133 to 1184 (REQR…NALC).

Belongs to the NRAP family. In terms of assembly, part of the small subunit (SSU) processome, composed of more than 70 proteins and the RNA chaperone small nucleolar RNA (snoRNA) U3.

Its subcellular location is the nucleus. It is found in the nucleolus. The protein localises to the chromosome. Functionally, part of the small subunit (SSU) processome, first precursor of the small eukaryotic ribosomal subunit. During the assembly of the SSU processome in the nucleolus, many ribosome biogenesis factors, an RNA chaperone and ribosomal proteins associate with the nascent pre-rRNA and work in concert to generate RNA folding, modifications, rearrangements and cleavage as well as targeted degradation of pre-ribosomal RNA by the RNA exosome. This chain is Nucleolar protein 6, found in Drosophila virilis (Fruit fly).